Consider the following 132-residue polypeptide: MDLEYPDDLRYLDSHEYVRLDGEIATIGLSAFAIEQLGDIVHLELPEVGEALEKGESFGAIESVKAAEDLYPPVSGTVIDRNEEMIENPDQLADDPYGDGWLIKVRVSNLDAELDDTLSASEYQAQLEGDDD.

Residues 24 to 106 (IATIGLSAFA…YGDGWLIKVR (83 aa)) enclose the Lipoyl-binding domain. Lys65 carries the post-translational modification N6-lipoyllysine.

This sequence belongs to the GcvH family. As to quaternary structure, the glycine cleavage system is composed of four proteins: P, T, L and H. (R)-lipoate is required as a cofactor.

In terms of biological role, the glycine cleavage system catalyzes the degradation of glycine. The H protein shuttles the methylamine group of glycine from the P protein to the T protein. The sequence is that of Glycine cleavage system H protein from Rippkaea orientalis (strain PCC 8801 / RF-1) (Cyanothece sp. (strain PCC 8801)).